Here is a 160-residue protein sequence, read N- to C-terminus: SsrA-binding protein (160 aa).

Residues Leu-130–Val-160 form a disordered region. Basic and acidic residues predominate over residues Lys-139–Arg-150. The span at Gln-151–Val-160 shows a compositional bias: basic residues.

It belongs to the SmpB family.

Its subcellular location is the cytoplasm. Its function is as follows. Required for rescue of stalled ribosomes mediated by trans-translation. Binds to transfer-messenger RNA (tmRNA), required for stable association of tmRNA with ribosomes. tmRNA and SmpB together mimic tRNA shape, replacing the anticodon stem-loop with SmpB. tmRNA is encoded by the ssrA gene; the 2 termini fold to resemble tRNA(Ala) and it encodes a 'tag peptide', a short internal open reading frame. During trans-translation Ala-aminoacylated tmRNA acts like a tRNA, entering the A-site of stalled ribosomes, displacing the stalled mRNA. The ribosome then switches to translate the ORF on the tmRNA; the nascent peptide is terminated with the 'tag peptide' encoded by the tmRNA and targeted for degradation. The ribosome is freed to recommence translation, which seems to be the essential function of trans-translation. This Alkalilimnicola ehrlichii (strain ATCC BAA-1101 / DSM 17681 / MLHE-1) protein is SsrA-binding protein.